The chain runs to 242 residues: NAD(P)H-hydrate epimerase (242 aa).

Residues 11–221 (AKALDAELMS…KVITKKFNLS (211 aa)) enclose the YjeF N-terminal domain. 61–65 (NNGGD) serves as a coordination point for (6S)-NADPHX. Residues Asn-62 and Asp-128 each contribute to the K(+) site. Residues 132 to 138 (GFSFKGP) and Asp-161 each bind (6S)-NADPHX. Ser-164 is a K(+) binding site.

It belongs to the NnrE/AIBP family. Requires K(+) as cofactor.

It is found in the cytoplasm. The protein localises to the mitochondrion. It localises to the nucleus. The enzyme catalyses (6R)-NADHX = (6S)-NADHX. The catalysed reaction is (6R)-NADPHX = (6S)-NADPHX. Functionally, catalyzes the epimerization of the S- and R-forms of NAD(P)HX, a damaged form of NAD(P)H that is a result of enzymatic or heat-dependent hydration. This is a prerequisite for the S-specific NAD(P)H-hydrate dehydratase to allow the repair of both epimers of NAD(P)HX. May have a role in meiosis. The protein is NAD(P)H-hydrate epimerase (mug182) of Schizosaccharomyces pombe (strain 972 / ATCC 24843) (Fission yeast).